The chain runs to 358 residues: Peptide chain release factor 1 (358 aa).

At Gln236 the chain carries N5-methylglutamine.

It belongs to the prokaryotic/mitochondrial release factor family. Post-translationally, methylated by PrmC. Methylation increases the termination efficiency of RF1.

The protein resides in the cytoplasm. Functionally, peptide chain release factor 1 directs the termination of translation in response to the peptide chain termination codons UAG and UAA. The sequence is that of Peptide chain release factor 1 from Corynebacterium efficiens (strain DSM 44549 / YS-314 / AJ 12310 / JCM 11189 / NBRC 100395).